Reading from the N-terminus, the 443-residue chain is Nuclear pore complex-interacting protein family member B15 (443 aa).

Positions 1 to 18 (MRLRFWLLIWLLLGFISH) are cleaved as a signal peptide. Residue Asn111 is glycosylated (N-linked (GlcNAc...) asparagine). Disordered stretches follow at residues 242–262 (RMGR…NSLS) and 330–413 (SPLP…TRHC). The segment covering 252–262 (QQHSITDNSLS) has biased composition (polar residues). Over residues 351–393 (EAEKPPKPKRWRVDEVEQSPKPKRRRADEVEQSPKPKRQREAE) the composition is skewed to basic and acidic residues. Residues 399–412 (KPKRRRLSKLRTRH) show a composition bias toward basic residues.

The protein belongs to the NPIP family.

It localises to the secreted. This chain is Nuclear pore complex-interacting protein family member B15 (NPIPB15), found in Homo sapiens (Human).